We begin with the raw amino-acid sequence, 264 residues long: Thymidylate synthase (264 aa).

A dUMP-binding site is contributed by Arg21. A (6R)-5,10-methylene-5,6,7,8-tetrahydrofolate-binding site is contributed by His51. 126–127 (RR) lines the dUMP pocket. Cys146 (nucleophile) is an active-site residue. Residues 166–169 (RSCD), Asn177, and 207–209 (HLY) contribute to the dUMP site. Asp169 provides a ligand contact to (6R)-5,10-methylene-5,6,7,8-tetrahydrofolate. Residue Ala263 coordinates (6R)-5,10-methylene-5,6,7,8-tetrahydrofolate.

This sequence belongs to the thymidylate synthase family. Bacterial-type ThyA subfamily. As to quaternary structure, homodimer.

Its subcellular location is the cytoplasm. The enzyme catalyses dUMP + (6R)-5,10-methylene-5,6,7,8-tetrahydrofolate = 7,8-dihydrofolate + dTMP. It participates in pyrimidine metabolism; dTTP biosynthesis. Functionally, catalyzes the reductive methylation of 2'-deoxyuridine-5'-monophosphate (dUMP) to 2'-deoxythymidine-5'-monophosphate (dTMP) while utilizing 5,10-methylenetetrahydrofolate (mTHF) as the methyl donor and reductant in the reaction, yielding dihydrofolate (DHF) as a by-product. This enzymatic reaction provides an intracellular de novo source of dTMP, an essential precursor for DNA biosynthesis. This is Thymidylate synthase from Serratia proteamaculans (strain 568).